Here is an 88-residue protein sequence, read N- to C-terminus: Protein alpha-1 (88 aa).

A helical membrane pass occupies residues 38–58 (GFWIILIILLGILAIRIAIKV).

The protein resides in the membrane. This Bos taurus (Bovine) protein is Protein alpha-1 (alpha).